We begin with the raw amino-acid sequence, 936 residues long: VPS35 endosomal protein-sorting factor-like (936 aa).

Disordered stretches follow at residues S43–L69 and D87–D113. The segment covering K51–L69 has biased composition (low complexity). S265 is subject to Phosphoserine. Residues A672–F692 traverse the membrane as a helical segment.

Belongs to the VPS35L family. As to quaternary structure, component of the heterotrimeric retriever complex formed by VPS26C, VPS29 and VPS35L. Interacts with VPS29. Interacts with COMMD1, CCDC93 and CCDC22; associates with the CCC (COMMD/CCDC22/CCDC93) complex which contains at least COMMD1 (and possibly other COMM domain-containing proteins), CCDC22 and CCDC93. Interacts with WASHC1, WASHC2A and WASHC2C. Interacts with SNX17 and SNX31.

The protein localises to the membrane. It localises to the endosome. Acts as a component of the retriever complex. The retriever complex is a heterotrimeric complex related to retromer cargo-selective complex (CSC) and essential for retromer-independent retrieval and recycling of numerous cargos such as integrin alpha-5/beta-1 (ITGA5:ITGB1). The recruitment of the retriever complex to the endosomal membrane involves CCC and WASH complexes. In the endosomes, drives the retrieval and recycling of NxxY-motif-containing cargo proteins by coupling to SNX17, a cargo essential for the homeostatic maintenance of numerous cell surface proteins associated with processes that include cell migration, cell adhesion, nutrient supply and cell signaling. Involved in copper-dependent ATP7A trafficking between the trans-Golgi network and vesicles in the cell periphery; the function is proposed to depend on its association with the CCC complex and cooperation with the WASH complex on early endosomes. Seems not to be required for CCC complex stability. The chain is VPS35 endosomal protein-sorting factor-like from Rattus norvegicus (Rat).